The chain runs to 105 residues: Cuticle protein AMP2 (105 aa).

Residues 1–21 form a disordered region; it reads DRDAQTLTDERSDQGDGNFRY. One can recognise a Chitin-binding type R&amp;R domain in the interval 16–81; it reads DGNFRYEFET…PSSDLLPVGP (66 aa).

In terms of tissue distribution, arthrodial membrane.

The polypeptide is Cuticle protein AMP2 (Homarus americanus (American lobster)).